The chain runs to 324 residues: dITP/XTP pyrophosphatase (324 aa).

The segment at 1-127 (MTKTIFESKT…KNDNNFGDTI (127 aa)) is unknown. The segment at 128-324 (LIATHNEGKT…EVFPKWQLEN (197 aa)) is NTP pyrophosphatase. 131 to 136 (THNEGK) serves as a coordination point for substrate. Mg(2+) contacts are provided by E164 and D193. D193 functions as the Proton acceptor in the catalytic mechanism. Residues S194, 277 to 280 (FGYD), K300, and 305 to 306 (HR) each bind substrate.

Belongs to the HAM1 NTPase family. As to quaternary structure, homodimer. It depends on Mg(2+) as a cofactor.

The enzyme catalyses XTP + H2O = XMP + diphosphate + H(+). The catalysed reaction is dITP + H2O = dIMP + diphosphate + H(+). It catalyses the reaction ITP + H2O = IMP + diphosphate + H(+). In terms of biological role, pyrophosphatase that catalyzes the hydrolysis of nucleoside triphosphates to their monophosphate derivatives, with a high preference for the non-canonical purine nucleotides XTP (xanthosine triphosphate), dITP (deoxyinosine triphosphate) and ITP. Seems to function as a house-cleaning enzyme that removes non-canonical purine nucleotides from the nucleotide pool, thus preventing their incorporation into DNA/RNA and avoiding chromosomal lesions. This chain is dITP/XTP pyrophosphatase, found in Streptococcus agalactiae serotype III (strain NEM316).